We begin with the raw amino-acid sequence, 1202 residues long: Putative late blight resistance protein homolog R1B-8 (1202 aa).

Coiled coils occupy residues 345-368 and 437-459; these read RYSDSLAFLKNQLQVIQTEFESLQ and LRMNEEIVGFEDVIEKLRNRLLN. The NB-ARC domain maps to 426 to 741; sequence IARTSSQLAR…ISESFIKSCE (316 aa). Residue 471-478 participates in ATP binding; it reads GMPGLGKT. LRR repeat units lie at residues 865–889, 908–936, 1011–1036, 1040–1059, 1060–1084, 1086–1111, and 1128–1151; these read FKFLKVLDLEHQVIIDFIPTELFYL, LWNLETLILKSRSASKHNRVLLPSTVWDM, PIRLEILKLYNRSKAFKTIPFCISAP, YLKLSRFYLDSQYLSETADH, LKHLEVLKLSCVEFGDHGEWEVSNG, FPQLKILKLEYVSLMKWIVADDVFPN, and SCFMDILSLKYIKVDEYSESVVQS.

This sequence belongs to the disease resistance NB-LRR family.

It is found in the cytoplasm. It localises to the membrane. Functionally, confers resistance to late blight (Phytophthora infestans) races carrying the avirulence gene Avr1. Resistance proteins guard the plant against pathogens that contain an appropriate avirulence protein via an indirect interaction with this avirulence protein. That triggers a defense system including the hypersensitive response, which restricts the pathogen growth. The protein is Putative late blight resistance protein homolog R1B-8 (R1B-8) of Solanum demissum (Wild potato).